We begin with the raw amino-acid sequence, 394 residues long: NAD(P)H-quinone oxidoreductase subunit H (394 aa).

The protein belongs to the complex I 49 kDa subunit family. As to quaternary structure, NDH-1 can be composed of about 15 different subunits; different subcomplexes with different compositions have been identified which probably have different functions.

The protein resides in the cellular thylakoid membrane. The enzyme catalyses a plastoquinone + NADH + (n+1) H(+)(in) = a plastoquinol + NAD(+) + n H(+)(out). The catalysed reaction is a plastoquinone + NADPH + (n+1) H(+)(in) = a plastoquinol + NADP(+) + n H(+)(out). Its function is as follows. NDH-1 shuttles electrons from an unknown electron donor, via FMN and iron-sulfur (Fe-S) centers, to quinones in the respiratory and/or the photosynthetic chain. The immediate electron acceptor for the enzyme in this species is believed to be plastoquinone. Couples the redox reaction to proton translocation, and thus conserves the redox energy in a proton gradient. Cyanobacterial NDH-1 also plays a role in inorganic carbon-concentration. This chain is NAD(P)H-quinone oxidoreductase subunit H, found in Synechococcus sp. (strain CC9311).